The chain runs to 99 residues: Large ribosomal subunit protein eL21 (99 aa).

Belongs to the eukaryotic ribosomal protein eL21 family.

The chain is Large ribosomal subunit protein eL21 from Methanocella arvoryzae (strain DSM 22066 / NBRC 105507 / MRE50).